A 160-amino-acid chain; its full sequence is SsrA-binding protein (160 aa).

Basic and acidic residues predominate over residues 138–148 (KRDDIKDREWQ). A disordered region spans residues 138–160 (KRDDIKDREWQTAKSRIMKHANR).

It belongs to the SmpB family.

It is found in the cytoplasm. Its function is as follows. Required for rescue of stalled ribosomes mediated by trans-translation. Binds to transfer-messenger RNA (tmRNA), required for stable association of tmRNA with ribosomes. tmRNA and SmpB together mimic tRNA shape, replacing the anticodon stem-loop with SmpB. tmRNA is encoded by the ssrA gene; the 2 termini fold to resemble tRNA(Ala) and it encodes a 'tag peptide', a short internal open reading frame. During trans-translation Ala-aminoacylated tmRNA acts like a tRNA, entering the A-site of stalled ribosomes, displacing the stalled mRNA. The ribosome then switches to translate the ORF on the tmRNA; the nascent peptide is terminated with the 'tag peptide' encoded by the tmRNA and targeted for degradation. The ribosome is freed to recommence translation, which seems to be the essential function of trans-translation. The polypeptide is SsrA-binding protein (Serratia proteamaculans (strain 568)).